Here is a 155-residue protein sequence, read N- to C-terminus: S-ribosylhomocysteine lyase (155 aa).

Fe cation is bound by residues histidine 58, histidine 62, and cysteine 125.

Belongs to the LuxS family. Homodimer. The cofactor is Fe cation.

The enzyme catalyses S-(5-deoxy-D-ribos-5-yl)-L-homocysteine = (S)-4,5-dihydroxypentane-2,3-dione + L-homocysteine. Involved in the synthesis of autoinducer 2 (AI-2) which is secreted by bacteria and is used to communicate both the cell density and the metabolic potential of the environment. The regulation of gene expression in response to changes in cell density is called quorum sensing. Catalyzes the transformation of S-ribosylhomocysteine (RHC) to homocysteine (HC) and 4,5-dihydroxy-2,3-pentadione (DPD). The polypeptide is S-ribosylhomocysteine lyase (Helicobacter pylori (strain Shi470)).